Here is a 59-residue protein sequence, read N- to C-terminus: Large ribosomal subunit protein bL32c (59 aa).

The disordered stretch occupies residues 37 to 59; that stretch reads SRSFSSGNEHPKPKGFSGQQTNK.

Belongs to the bacterial ribosomal protein bL32 family.

It localises to the plastid. Its subcellular location is the chloroplast. The protein is Large ribosomal subunit protein bL32c of Hordeum vulgare (Barley).